Consider the following 146-residue polypeptide: ATP synthase F(0) complex subunit C2, mitochondrial (146 aa).

Residues 1-71 constitute a mitochondrion transit peptide; the sequence is MYACSKFVST…RSFQTSAISR (71 aa). Residues 87-107 form a helical membrane-spanning segment; the sequence is VGVAGSGAGIGTVFGSLIIGY. Lysine 114 carries the post-translational modification N6,N6,N6-trimethyllysine. The helical transmembrane segment at 122 to 142 threads the bilayer; that stretch reads ILGFALSEAMGLFCLMVAFLI.

Belongs to the ATPase C chain family. As to quaternary structure, F-type ATPases have 2 components, CF(1) - the catalytic core - and CF(0) - the membrane proton channel. CF(1) has five subunits: alpha(3), beta(3), gamma(1), delta(1), epsilon(1). CF(0) has three main subunits: a, b and c. Interacts with DNAJC30; interaction is direct. Trimethylated by ATPSCKMT at Lys-114. Methylation is required for proper incorporation of the C subunit into the ATP synthase complex and mitochondrial respiration.

Its subcellular location is the mitochondrion membrane. Mitochondrial membrane ATP synthase (F(1)F(0) ATP synthase or Complex V) produces ATP from ADP in the presence of a proton gradient across the membrane which is generated by electron transport complexes of the respiratory chain. F-type ATPases consist of two structural domains, F(1) - containing the extramembraneous catalytic core and F(0) - containing the membrane proton channel, linked together by a central stalk and a peripheral stalk. During catalysis, ATP synthesis in the catalytic domain of F(1) is coupled via a rotary mechanism of the central stalk subunits to proton translocation. Part of the complex F(0) domain. A homomeric c-ring of probably 10 subunits is part of the complex rotary element. The protein is ATP synthase F(0) complex subunit C2, mitochondrial of Mus musculus (Mouse).